The sequence spans 280 residues: Shikimate kinase (280 aa).

An ATP-binding site is contributed by 74–84 (PGGSGLGSSSA).

The protein belongs to the GHMP kinase family. Archaeal shikimate kinase subfamily.

The protein resides in the cytoplasm. The enzyme catalyses shikimate + ATP = 3-phosphoshikimate + ADP + H(+). It participates in metabolic intermediate biosynthesis; chorismate biosynthesis; chorismate from D-erythrose 4-phosphate and phosphoenolpyruvate: step 5/7. The chain is Shikimate kinase (aroK) from Archaeoglobus fulgidus (strain ATCC 49558 / DSM 4304 / JCM 9628 / NBRC 100126 / VC-16).